A 172-amino-acid chain; its full sequence is Scytalone dehydratase-like protein Arp1 (172 aa).

A substrate-binding site is contributed by Tyr-49. Catalysis depends on residues His-84 and His-109. Asn-130 contributes to the substrate binding site.

This sequence belongs to the scytalone dehydratase family. Homotrimer. Each subunit contains an active site, located in the central part of the hydrophobic core of the monomer, which functions independently.

Its function is as follows. Scytalone dehydratase-like protein; part of the Pks2 gene cluster that mediates the formation of infectious structures (appressoria), enabling these fungi to kill insects faster. The product of the Pks2 gene cluster is different from the one of Pks1 and has still not been identified. This is Scytalone dehydratase-like protein Arp1 from Metarhizium guizhouense (strain ARSEF 977).